The following is a 106-amino-acid chain: Putative double-stranded DNA mimic protein PM0536 (106 aa).

It belongs to the putative dsDNA mimic protein family.

Functionally, may act as a double-stranded DNA (dsDNA) mimic. Probably regulates the activity of a dsDNA-binding protein. This chain is Putative double-stranded DNA mimic protein PM0536, found in Pasteurella multocida (strain Pm70).